We begin with the raw amino-acid sequence, 327 residues long: Phenylalanine--tRNA ligase alpha subunit (327 aa).

Glutamate 252 is a Mg(2+) binding site.

It belongs to the class-II aminoacyl-tRNA synthetase family. Phe-tRNA synthetase alpha subunit type 1 subfamily. As to quaternary structure, tetramer of two alpha and two beta subunits. It depends on Mg(2+) as a cofactor.

It localises to the cytoplasm. The catalysed reaction is tRNA(Phe) + L-phenylalanine + ATP = L-phenylalanyl-tRNA(Phe) + AMP + diphosphate + H(+). The polypeptide is Phenylalanine--tRNA ligase alpha subunit (Proteus mirabilis (strain HI4320)).